We begin with the raw amino-acid sequence, 388 residues long: MRYLTAGESHGPQLTTILEGVPAGLTLLAEHINKELARRQKGYGRGRRMQIEKDEVKIFSGVRHGKTLGSPITLVVENRDWKHWQNIMSIEPIDSAEEVKRKVTRPRPGHADLNGALKYGHRDMRNVLERSSARETTVRVAAGAVAKRILEELGIRVAGHVIEIGGVRAERMDYRSLEELQQVTEESPVRCFDEKAAVKMMEAIDEAKKNGDSIGGIVEVIVEGVPAGVGSHVHYDRKLDAKIAAAIVSINAFKGVEFGIGFEAARRPGSEVHDEIIWSKEKGFTRRTNRAGGFEGGMTTGMPIVVRGVMKPIPTLYKPLQSVDIETKEPFTASIERSDSCAVPAASVVAEAVVAWEVASAIVDQFGQDRMDLIKENVEKMRRYAREF.

NADP(+)-binding residues include Arg-39 and Arg-45. Residues 130–132 (RSS), 251–252 (NA), Gly-296, 311–315 (KPIPT), and Arg-337 contribute to the FMN site.

Belongs to the chorismate synthase family. As to quaternary structure, homotetramer. It depends on FMNH2 as a cofactor.

It catalyses the reaction 5-O-(1-carboxyvinyl)-3-phosphoshikimate = chorismate + phosphate. It functions in the pathway metabolic intermediate biosynthesis; chorismate biosynthesis; chorismate from D-erythrose 4-phosphate and phosphoenolpyruvate: step 7/7. In terms of biological role, catalyzes the anti-1,4-elimination of the C-3 phosphate and the C-6 proR hydrogen from 5-enolpyruvylshikimate-3-phosphate (EPSP) to yield chorismate, which is the branch point compound that serves as the starting substrate for the three terminal pathways of aromatic amino acid biosynthesis. This reaction introduces a second double bond into the aromatic ring system. This is Chorismate synthase from Geobacillus sp. (strain WCH70).